Reading from the N-terminus, the 815-residue chain is MSFLRPSIWRSSPMQMVQLFVQIEAAHDTVDELGKLGLIQFLDDNEHVNLFQRNFVNEVKRCDDMEKKLKFFEDQVKKEPKLQKLLPDNMLSVVDDDSQMDELEGRFDELESELKQVNANQETLQRNYNELIQLRHVLTKDSVFFQENPNLIEGEGHEHSARSPLLAEDQHVSEVAKQGVKLGFITGVMNTDKMPQFQRSLWRTTRGNNYVKDARIEEEIIDPQTGEETAKTVFIVFFQGERLQQKIKKICESFGANIYDCPDNSFERSNLLQKVTVRITDLYEVLQRSKDHKRQTLAGIVPRLYSWKKKVLLEKSIYHTMNLFDYDVGRKCLIAKGWTPKDKIEEIQLALRTATTRSGALVPSVLSIIKTEGSPPTHFETNKYTSSFQEIVNAYGIAHYREVNPAVLTIVTFPFLFGVMFGDVGHGALLLLSALGLISLEKKLAGKKLNELIQMPFDGRYVLFLMSLFSIYVGFIYNECFSIPMNIFGSQYNLNSTTGLYTYQHTDRVYPVGVDPLWKGAPNELVYYNSFKMKLSIIFGVVQMSVGICFSLLNYLNQKGPIKIVNILTQFVPQMIFLWSIFGYMSVLIILKWVVPYRSFEVDKVDPPFILPTIIAMFLSPGGTPDVVFFSGQGAVQTALLFLALISIPVMLVIKPLFMKRFHFQEVERKKLGHHEEEHDDEALYTGHHGEEFEMGEVFVHQVIHTIEFVLGAVSNTASYLRLWALSLAHSELSSVFWERILIGQVERGNPFLAFVGFGAWLGASVAVLLLMESLSAFLHALRLHWVEFQNKFYIGDGVRFIPYSATRILSEDDE.

The Cytoplasmic segment spans residues Met-1–Glu-402. Residues Val-403–Phe-421 form a helical membrane-spanning segment. Residues Gly-422–Asp-423 lie on the Vacuolar side of the membrane. Residues Val-424–Leu-440 traverse the membrane as a helical segment. The Cytoplasmic segment spans residues Glu-441 to Gln-454. The helical transmembrane segment at Met-455–Pro-484 threads the bilayer. Residues Met-485 to Ser-530 are Vacuolar-facing. The chain crosses the membrane as a helical span at residues Phe-531 to Phe-550. Residues Ser-551–Phe-571 are Cytoplasmic-facing. A helical membrane pass occupies residues Val-572–Lys-592. Residues Trp-593–Ala-639 lie on the Vacuolar side of the membrane. A helical transmembrane segment spans residues Leu-640–Met-659. The Cytoplasmic portion of the chain corresponds to Lys-660–Thr-706. Residues Ile-707–Ser-731 traverse the membrane as a helical segment. Topologically, residues Glu-732–Gly-749 are vacuolar. A helical transmembrane segment spans residues Asn-750–Glu-788. At Phe-789–Glu-815 the chain is on the cytoplasmic side.

The protein belongs to the V-ATPase 116 kDa subunit family. The V-ATPase is a heteromultimeric enzyme.

Its subcellular location is the cytoplasmic vesicle membrane. The protein resides in the endosome membrane. It localises to the vacuole membrane. It is found in the lysosome membrane. In terms of biological role, essential component of the vacuolar proton pump (V-ATPase), a multimeric enzyme that catalyzes the translocation of protons across the membranes. Required for assembly and activity of the V-ATPase. Required in both the contractile vacuole system and the endosomal/lysosomal system. Also required for cytosolic pH regulation. The polypeptide is Vacuolar proton translocating ATPase 100 kDa subunit (vatM) (Dictyostelium discoideum (Social amoeba)).